The following is a 150-amino-acid chain: Large ribosomal subunit protein bL9 (150 aa).

It belongs to the bacterial ribosomal protein bL9 family.

Binds to the 23S rRNA. This chain is Large ribosomal subunit protein bL9, found in Streptococcus mutans serotype c (strain ATCC 700610 / UA159).